The sequence spans 79 residues: MNEIRVTQTLDTLGLRCPEPVMLVRKHIRFLEEGDVLLVIADDPATTRDIPSFCQFMEHTLLKSEIEHIPFQYWVKKGK.

The Cysteine persulfide intermediate role is filled by cysteine 17.

This sequence belongs to the sulfur carrier protein TusA family.

It is found in the cytoplasm. Functionally, sulfur carrier protein which probably makes part of a sulfur-relay system. The polypeptide is Sulfur carrier protein TusA (Pasteurella multocida (strain Pm70)).